Reading from the N-terminus, the 370-residue chain is Anhydro-N-acetylmuramic acid kinase (370 aa).

13–20 (GTSMDGVD) provides a ligand contact to ATP.

This sequence belongs to the anhydro-N-acetylmuramic acid kinase family.

The catalysed reaction is 1,6-anhydro-N-acetyl-beta-muramate + ATP + H2O = N-acetyl-D-muramate 6-phosphate + ADP + H(+). It functions in the pathway amino-sugar metabolism; 1,6-anhydro-N-acetylmuramate degradation. Its pathway is cell wall biogenesis; peptidoglycan recycling. Catalyzes the specific phosphorylation of 1,6-anhydro-N-acetylmuramic acid (anhMurNAc) with the simultaneous cleavage of the 1,6-anhydro ring, generating MurNAc-6-P. Is required for the utilization of anhMurNAc either imported from the medium or derived from its own cell wall murein, and thus plays a role in cell wall recycling. In Vibrio parahaemolyticus serotype O3:K6 (strain RIMD 2210633), this protein is Anhydro-N-acetylmuramic acid kinase.